Consider the following 943-residue polypeptide: Translation initiation factor IF-2 (943 aa).

The interval 46-359 (IKGMLSKQSA…MPQRKERPLP (314 aa)) is disordered. Low complexity predominate over residues 57–76 (KAPSSQAAKTPAKAAKTSSA). Basic and acidic residues-rich tracts occupy residues 92–103 (SNDHADVAEHSQ) and 110–124 (AKQENKPARSNKTSD). Positions 130 to 141 (SKSTILRPRSTQ) are enriched in polar residues. Over residues 142 to 190 (TAHTNTNHNRGGNTASANNTANGRNSNRSNNNNNNRSANNANRSGNNNR) the composition is skewed to low complexity. 3 stretches are compositionally biased toward basic and acidic residues: residues 191–205 (SNERNRNDRNRRFDN), 239–250 (ASERQQPKRQEA), and 259–271 (KRSEQPRTERPRT). Low complexity-rich tracts occupy residues 289–299 (PAAAAPKPASA) and 315–330 (NFGRSNSYGNRNGFNR). Positions 331–342 (NNRRNKKNKRRQ) are enriched in basic residues. Positions 346–358 (PKKEMPQRKERPL) are enriched in basic and acidic residues. The tr-type G domain occupies 444-613 (PRPPVVTIMG…LLEADVLELK (170 aa)). The G1 stretch occupies residues 453-460 (GHVDHGKT). A GTP-binding site is contributed by 453–460 (GHVDHGKT). Positions 478–482 (GITQH) are G2. Residues 499-502 (DTPG) are G3. Residues 499–503 (DTPGH) and 553–556 (NKID) contribute to the GTP site. The G4 stretch occupies residues 553 to 556 (NKID). A G5 region spans residues 589–591 (SAK).

The protein belongs to the TRAFAC class translation factor GTPase superfamily. Classic translation factor GTPase family. IF-2 subfamily.

It localises to the cytoplasm. One of the essential components for the initiation of protein synthesis. Protects formylmethionyl-tRNA from spontaneous hydrolysis and promotes its binding to the 30S ribosomal subunits. Also involved in the hydrolysis of GTP during the formation of the 70S ribosomal complex. The protein is Translation initiation factor IF-2 of Lacticaseibacillus casei (strain BL23) (Lactobacillus casei).